The chain runs to 431 residues: Enolase (431 aa).

Glutamine 167 is a binding site for (2R)-2-phosphoglycerate. Glutamate 209 functions as the Proton donor in the catalytic mechanism. Mg(2+) contacts are provided by aspartate 246, glutamate 289, and aspartate 316. (2R)-2-phosphoglycerate-binding residues include lysine 341, arginine 370, serine 371, and lysine 392. Lysine 341 acts as the Proton acceptor in catalysis.

The protein belongs to the enolase family. As to quaternary structure, component of the RNA degradosome, a multiprotein complex involved in RNA processing and mRNA degradation. The cofactor is Mg(2+).

The protein resides in the cytoplasm. It localises to the secreted. The protein localises to the cell surface. The enzyme catalyses (2R)-2-phosphoglycerate = phosphoenolpyruvate + H2O. The protein operates within carbohydrate degradation; glycolysis; pyruvate from D-glyceraldehyde 3-phosphate: step 4/5. In terms of biological role, catalyzes the reversible conversion of 2-phosphoglycerate (2-PG) into phosphoenolpyruvate (PEP). It is essential for the degradation of carbohydrates via glycolysis. The polypeptide is Enolase (Shewanella halifaxensis (strain HAW-EB4)).